Consider the following 270-residue polypeptide: Diaminopimelate epimerase (270 aa).

The substrate site is built by Asn-15, Gln-49, and Asn-66. Catalysis depends on Cys-75, which acts as the Proton donor. Residues Gly-76–Asn-77, Asn-155, Asn-187, and Glu-204–Arg-205 contribute to the substrate site. Cys-213 functions as the Proton acceptor in the catalytic mechanism. Residue Gly-214 to Ser-215 participates in substrate binding.

The protein belongs to the diaminopimelate epimerase family. In terms of assembly, homodimer.

It localises to the cytoplasm. The enzyme catalyses (2S,6S)-2,6-diaminopimelate = meso-2,6-diaminopimelate. Its pathway is amino-acid biosynthesis; L-lysine biosynthesis via DAP pathway; DL-2,6-diaminopimelate from LL-2,6-diaminopimelate: step 1/1. In terms of biological role, catalyzes the stereoinversion of LL-2,6-diaminopimelate (L,L-DAP) to meso-diaminopimelate (meso-DAP), a precursor of L-lysine and an essential component of the bacterial peptidoglycan. This is Diaminopimelate epimerase from Rickettsia massiliae (strain Mtu5).